Here is a 479-residue protein sequence, read N- to C-terminus: tRNA modification GTPase MnmE (479 aa).

3 residues coordinate (6S)-5-formyl-5,6,7,8-tetrahydrofolate: Arg25, Glu82, and Lys134. The region spanning 230–401 (GLRVVIAGQP…LRAALLARAG (172 aa)) is the TrmE-type G domain. Asn240 lines the K(+) pocket. GTP is bound by residues 240-245 (NAGKSS), 259-265 (TPIPGTT), 284-287 (DTAG), 352-355 (NKAD), and 382-384 (SAR). Ser244 lines the Mg(2+) pocket. The K(+) site is built by Thr259, Ile261, and Thr264. Residue Thr265 participates in Mg(2+) binding. Residue Lys479 coordinates (6S)-5-formyl-5,6,7,8-tetrahydrofolate.

Belongs to the TRAFAC class TrmE-Era-EngA-EngB-Septin-like GTPase superfamily. TrmE GTPase family. Homodimer. Heterotetramer of two MnmE and two MnmG subunits. K(+) serves as cofactor.

The protein localises to the cytoplasm. Its function is as follows. Exhibits a very high intrinsic GTPase hydrolysis rate. Involved in the addition of a carboxymethylaminomethyl (cmnm) group at the wobble position (U34) of certain tRNAs, forming tRNA-cmnm(5)s(2)U34. The protein is tRNA modification GTPase MnmE of Leptothrix cholodnii (strain ATCC 51168 / LMG 8142 / SP-6) (Leptothrix discophora (strain SP-6)).